Consider the following 134-residue polypeptide: Arsenate reductase 1 (134 aa).

Active-site nucleophile residues include Cys11, Cys83, and Cys90. Intrachain disulfides connect Cys11/Cys83 and Cys83/Cys90.

This sequence belongs to the low molecular weight phosphotyrosine protein phosphatase family. Thioredoxin-coupled ArsC subfamily.

The protein localises to the cytoplasm. It catalyses the reaction arsenate + [thioredoxin]-dithiol + H(+) = arsenite + [thioredoxin]-disulfide + H2O. In terms of biological role, catalyzes the reduction of arsenate [As(V)] to arsenite [As(III)]. This chain is Arsenate reductase 1, found in Bacillus cereus (strain ATCC 10987 / NRS 248).